We begin with the raw amino-acid sequence, 200 residues long: Putative 3-methyladenine DNA glycosylase (200 aa).

Belongs to the DNA glycosylase MPG family.

This is Putative 3-methyladenine DNA glycosylase from Methanocella arvoryzae (strain DSM 22066 / NBRC 105507 / MRE50).